A 358-amino-acid chain; its full sequence is MRVDLFDFDLPEERIALRPASPRDSARMLVVRPGKPLEDCIVRDLPQFLRPGDALVFNDTKVIPARLSGIRRRGETVAQIEATLHMRAGPDRWKAFLKPAKRVAVGERIQFGHDGESCFLGSLDATVAEKGEGGEALLVFDFSGPVLDEAIAAAGHVPLPPYIASKRPDDERDRADYQTIYAREEGAVAAPTAGLHFTPDLFSALDTIGVERHFVTLHVGAGTFLPVKAEDTEAHRMHAEWGEVDGMTADALNAVRARGGCIIAVGTTSLRLLESAAEPSGLLKAWSGETDIFITPGYRFRAIDILMTNFHLPRSTLFMLVSAFSGLETMKSAYSHAIDQGYRFYSYGDSSLLFREDT.

It belongs to the QueA family. Monomer.

It is found in the cytoplasm. The catalysed reaction is 7-aminomethyl-7-carbaguanosine(34) in tRNA + S-adenosyl-L-methionine = epoxyqueuosine(34) in tRNA + adenine + L-methionine + 2 H(+). It functions in the pathway tRNA modification; tRNA-queuosine biosynthesis. Functionally, transfers and isomerizes the ribose moiety from AdoMet to the 7-aminomethyl group of 7-deazaguanine (preQ1-tRNA) to give epoxyqueuosine (oQ-tRNA). In Chelativorans sp. (strain BNC1), this protein is S-adenosylmethionine:tRNA ribosyltransferase-isomerase.